The primary structure comprises 169 residues: Ribosome maturation factor RimM (169 aa).

Residues 94 to 168 form the PRC barrel domain; the sequence is DDEFYHADLI…RIVADPPEGL (75 aa).

The protein belongs to the RimM family. Binds ribosomal protein uS19.

Its subcellular location is the cytoplasm. In terms of biological role, an accessory protein needed during the final step in the assembly of 30S ribosomal subunit, possibly for assembly of the head region. Essential for efficient processing of 16S rRNA. May be needed both before and after RbfA during the maturation of 16S rRNA. It has affinity for free ribosomal 30S subunits but not for 70S ribosomes. In Cereibacter sphaeroides (strain ATCC 17023 / DSM 158 / JCM 6121 / CCUG 31486 / LMG 2827 / NBRC 12203 / NCIMB 8253 / ATH 2.4.1.) (Rhodobacter sphaeroides), this protein is Ribosome maturation factor RimM.